The chain runs to 95 residues: Aspartyl/glutamyl-tRNA(Asn/Gln) amidotransferase subunit C (95 aa).

This sequence belongs to the GatC family. Heterotrimer of A, B and C subunits.

The catalysed reaction is L-glutamyl-tRNA(Gln) + L-glutamine + ATP + H2O = L-glutaminyl-tRNA(Gln) + L-glutamate + ADP + phosphate + H(+). It catalyses the reaction L-aspartyl-tRNA(Asn) + L-glutamine + ATP + H2O = L-asparaginyl-tRNA(Asn) + L-glutamate + ADP + phosphate + 2 H(+). Allows the formation of correctly charged Asn-tRNA(Asn) or Gln-tRNA(Gln) through the transamidation of misacylated Asp-tRNA(Asn) or Glu-tRNA(Gln) in organisms which lack either or both of asparaginyl-tRNA or glutaminyl-tRNA synthetases. The reaction takes place in the presence of glutamine and ATP through an activated phospho-Asp-tRNA(Asn) or phospho-Glu-tRNA(Gln). The chain is Aspartyl/glutamyl-tRNA(Asn/Gln) amidotransferase subunit C from Alcanivorax borkumensis (strain ATCC 700651 / DSM 11573 / NCIMB 13689 / SK2).